Consider the following 171-residue polypeptide: Small ribosomal subunit protein uS4 (171 aa).

The S4 RNA-binding domain maps to 104 to 168; that stretch reads RRLQTIVYKK…SPFKERAEEA (65 aa).

It belongs to the universal ribosomal protein uS4 family. In terms of assembly, part of the 30S ribosomal subunit. Contacts protein S5. The interaction surface between S4 and S5 is involved in control of translational fidelity.

One of the primary rRNA binding proteins, it binds directly to 16S rRNA where it nucleates assembly of the body of the 30S subunit. Functionally, with S5 and S12 plays an important role in translational accuracy. The polypeptide is Small ribosomal subunit protein uS4 (Aeropyrum pernix (strain ATCC 700893 / DSM 11879 / JCM 9820 / NBRC 100138 / K1)).